We begin with the raw amino-acid sequence, 136 residues long: Nucleoside diphosphate kinase (136 aa).

ATP contacts are provided by K10, F58, R86, T92, R104, and N114. Catalysis depends on H117, which acts as the Pros-phosphohistidine intermediate.

The protein belongs to the NDK family. Homotetramer. Mg(2+) serves as cofactor.

The protein localises to the cytoplasm. It catalyses the reaction a 2'-deoxyribonucleoside 5'-diphosphate + ATP = a 2'-deoxyribonucleoside 5'-triphosphate + ADP. The catalysed reaction is a ribonucleoside 5'-diphosphate + ATP = a ribonucleoside 5'-triphosphate + ADP. Major role in the synthesis of nucleoside triphosphates other than ATP. The ATP gamma phosphate is transferred to the NDP beta phosphate via a ping-pong mechanism, using a phosphorylated active-site intermediate. This Corynebacterium efficiens (strain DSM 44549 / YS-314 / AJ 12310 / JCM 11189 / NBRC 100395) protein is Nucleoside diphosphate kinase.